A 100-amino-acid polypeptide reads, in one-letter code: Urease subunit gamma (100 aa).

This sequence belongs to the urease gamma subunit family. Heterotrimer of UreA (gamma), UreB (beta) and UreC (alpha) subunits. Three heterotrimers associate to form the active enzyme.

It localises to the cytoplasm. It carries out the reaction urea + 2 H2O + H(+) = hydrogencarbonate + 2 NH4(+). Its pathway is nitrogen metabolism; urea degradation; CO(2) and NH(3) from urea (urease route): step 1/1. In Pseudomonas aeruginosa (strain UCBPP-PA14), this protein is Urease subunit gamma.